Here is a 142-residue protein sequence, read N- to C-terminus: UPF0179 protein PH1477 (142 aa).

This sequence belongs to the UPF0179 family.

The chain is UPF0179 protein PH1477 from Pyrococcus horikoshii (strain ATCC 700860 / DSM 12428 / JCM 9974 / NBRC 100139 / OT-3).